Reading from the N-terminus, the 1217-residue chain is ATP-dependent helicase/nuclease subunit A (1217 aa).

The 466-residue stretch at 10–475 folds into the UvrD-like helicase ATP-binding domain; sequence VIWTDAQWQS…IDLSQNFRSR (466 aa). 31–38 provides a ligand contact to ATP; the sequence is AAAGSGKT. The region spanning 476-786 is the UvrD-like helicase C-terminal domain; the sequence is KEVLSTTNYI…RMMTIHSSKG (311 aa).

The protein belongs to the helicase family. AddA subfamily. As to quaternary structure, heterodimer of AddA and AddB/RexB. Requires Mg(2+) as cofactor.

The enzyme catalyses Couples ATP hydrolysis with the unwinding of duplex DNA by translocating in the 3'-5' direction.. It catalyses the reaction ATP + H2O = ADP + phosphate + H(+). In terms of biological role, the heterodimer acts as both an ATP-dependent DNA helicase and an ATP-dependent, dual-direction single-stranded exonuclease. Recognizes the chi site generating a DNA molecule suitable for the initiation of homologous recombination. The AddA nuclease domain is required for chi fragment generation; this subunit has the helicase and 3' -&gt; 5' nuclease activities. This is ATP-dependent helicase/nuclease subunit A from Staphylococcus aureus (strain MW2).